The chain runs to 216 residues: Dimethylamine corrinoid protein 1 (216 aa).

The B12-binding N-terminal domain maps to 1–91 (MTSKEELLQE…DMPAGTETKK (91 aa)). The 125-residue stretch at 92–216 (LGVIVNGTVE…AKAKELLVGK (125 aa)) folds into the B12-binding domain. Histidine 105 contacts methylcob(III)alamin.

This sequence belongs to the methylamine corrinoid protein family.

The protein operates within one-carbon metabolism; methanogenesis from dimethylamine. Its function is as follows. Acts as a methyl group carrier between MtbB and MtbA. The chain is Dimethylamine corrinoid protein 1 (mtbC1) from Methanosarcina mazei (strain ATCC BAA-159 / DSM 3647 / Goe1 / Go1 / JCM 11833 / OCM 88) (Methanosarcina frisia).